The sequence spans 356 residues: Tetraacyldisaccharide 4'-kinase (356 aa).

51–58 (GWGGSGKT) serves as a coordination point for ATP.

The protein belongs to the LpxK family.

The catalysed reaction is a lipid A disaccharide + ATP = a lipid IVA + ADP + H(+). It functions in the pathway glycolipid biosynthesis; lipid IV(A) biosynthesis; lipid IV(A) from (3R)-3-hydroxytetradecanoyl-[acyl-carrier-protein] and UDP-N-acetyl-alpha-D-glucosamine: step 6/6. Functionally, transfers the gamma-phosphate of ATP to the 4'-position of a tetraacyldisaccharide 1-phosphate intermediate (termed DS-1-P) to form tetraacyldisaccharide 1,4'-bis-phosphate (lipid IVA). This is Tetraacyldisaccharide 4'-kinase from Oleidesulfovibrio alaskensis (strain ATCC BAA-1058 / DSM 17464 / G20) (Desulfovibrio alaskensis).